We begin with the raw amino-acid sequence, 721 residues long: Polyribonucleotide nucleotidyltransferase (721 aa).

Mg(2+) contacts are provided by Asp-495 and Asp-501. Positions 562–621 (PRLLSFRIDPELIGTVIGPGGRTIKGITERTNTKIDIEDSGIVTIASHDGAAADEAQKII) constitute a KH domain. In terms of domain architecture, S1 motif spans 631 to 699 (GEVFSGAITR…NRGRINLTLR (69 aa)). Residues 700–721 (GVPQNGEEAEPAPAPTPVAPLN) are disordered. Positions 711–721 (APAPTPVAPLN) are enriched in pro residues.

This sequence belongs to the polyribonucleotide nucleotidyltransferase family. Requires Mg(2+) as cofactor.

The protein localises to the cytoplasm. The enzyme catalyses RNA(n+1) + phosphate = RNA(n) + a ribonucleoside 5'-diphosphate. In terms of biological role, involved in mRNA degradation. Catalyzes the phosphorolysis of single-stranded polyribonucleotides processively in the 3'- to 5'-direction. This is Polyribonucleotide nucleotidyltransferase from Synechococcus sp. (strain WH7803).